We begin with the raw amino-acid sequence, 676 residues long: DNA-directed RNA polymerase subunit beta' (676 aa).

Cys-69, Cys-71, Cys-87, and Cys-90 together coordinate Zn(2+). Asp-485, Asp-487, and Asp-489 together coordinate Mg(2+).

The protein belongs to the RNA polymerase beta' chain family. RpoC1 subfamily. As to quaternary structure, in plastids the minimal PEP RNA polymerase catalytic core is composed of four subunits: alpha, beta, beta', and beta''. When a (nuclear-encoded) sigma factor is associated with the core the holoenzyme is formed, which can initiate transcription. Mg(2+) serves as cofactor. The cofactor is Zn(2+).

It is found in the plastid. It localises to the chloroplast. It catalyses the reaction RNA(n) + a ribonucleoside 5'-triphosphate = RNA(n+1) + diphosphate. In terms of biological role, DNA-dependent RNA polymerase catalyzes the transcription of DNA into RNA using the four ribonucleoside triphosphates as substrates. The protein is DNA-directed RNA polymerase subunit beta' of Fagopyrum esculentum subsp. ancestrale (Wild buckwheat).